We begin with the raw amino-acid sequence, 322 residues long: Cysteine protease YopT (322 aa).

The segment at 43–72 (SHSNRQKKLSATIKHNQSSRSMLDRKLTSD) is disordered. Residues Cys-139, His-258, and Asp-274 contribute to the active site.

The protein belongs to the peptidase C58 family. Interacts with human ARHA.

The protein localises to the secreted. Functionally, cysteine protease, which is translocated into infected cells and plays a central role in pathogenesis by cleaving the C-terminus end of the human small GTPase RhoA/ARHA, a regulator of cytoskeleton. Once cleaved, ARHA loses its lipid modification, and is released from the cell membrane, leading to the subsequent disruption of actin cytoskeleton of the host cell. This is Cysteine protease YopT (yopT) from Yersinia enterocolitica.